The primary structure comprises 102 residues: Large ribosomal subunit protein bL21 (102 aa).

This sequence belongs to the bacterial ribosomal protein bL21 family. As to quaternary structure, part of the 50S ribosomal subunit. Contacts protein L20.

In terms of biological role, this protein binds to 23S rRNA in the presence of protein L20. The sequence is that of Large ribosomal subunit protein bL21 from Oceanobacillus iheyensis (strain DSM 14371 / CIP 107618 / JCM 11309 / KCTC 3954 / HTE831).